The chain runs to 609 residues: Phosphoenolpyruvate carboxykinase [GTP] (609 aa).

Substrate is bound by residues Arg-81 and 220 to 222; that span reads YGG. 2 residues coordinate Mn(2+): Lys-229 and His-249. Residue Ser-271 coordinates substrate. Residue 272 to 277 coordinates GTP; the sequence is ACGKTN. Cys-273 is a catalytic residue. Residue Asp-296 coordinates Mn(2+). 387 to 389 is a substrate binding site; that stretch reads NSR. GTP-binding positions include Arg-389, Arg-420, and 515-518; that span reads FGEN.

The protein belongs to the phosphoenolpyruvate carboxykinase [GTP] family. Monomer. It depends on Mn(2+) as a cofactor.

The protein resides in the cytoplasm. It catalyses the reaction oxaloacetate + GTP = phosphoenolpyruvate + GDP + CO2. The protein operates within carbohydrate biosynthesis; gluconeogenesis. In terms of biological role, catalyzes the conversion of oxaloacetate (OAA) to phosphoenolpyruvate (PEP), the rate-limiting step in the metabolic pathway that produces glucose from lactate and other precursors derived from the citric acid cycle. The chain is Phosphoenolpyruvate carboxykinase [GTP] from Mycobacterium marinum (strain ATCC BAA-535 / M).